The primary structure comprises 430 residues: Histidine--tRNA ligase (430 aa).

Belongs to the class-II aminoacyl-tRNA synthetase family. As to quaternary structure, homodimer.

It is found in the cytoplasm. The enzyme catalyses tRNA(His) + L-histidine + ATP = L-histidyl-tRNA(His) + AMP + diphosphate + H(+). This is Histidine--tRNA ligase from Anaplasma marginale (strain St. Maries).